A 142-amino-acid polypeptide reads, in one-letter code: Negative cofactor 2 complex subunit alpha (142 aa).

The segment covering 1–11 (MADQVPVTTQL) has biased composition (polar residues). Residues 1 to 43 (MADQVPVTTQLPPIKPEHEVPLDAGGSPVGNMGTNSNNNNELG) form a disordered region. Phosphoserine is present on S27. The Histone-fold domain occupies 29-137 (VGNMGTNSNN…LCVEEGQTQP (109 aa)). At S141 the chain carries Phosphoserine.

Belongs to the NC2 alpha/DRAP1 family. As to quaternary structure, component of the NC2 (negative cofactor 2) complex composed of BUR6 and NCB2. The NC2 complex associates with SPT15/TBP. Interacts with SPT15/TBP.

Its subcellular location is the nucleus. Its function is as follows. Component of the NC2 complex which represses RNA polymerase II transcription through binding to SPT15/TBP and thereby inhibiting the assembly of the preinitiation complex. The NC2 complex may also mediate transcriptional activation from TATA-driven promoters through association with SPT15/TBP. The polypeptide is Negative cofactor 2 complex subunit alpha (BUR6) (Saccharomyces cerevisiae (strain ATCC 204508 / S288c) (Baker's yeast)).